The chain runs to 506 residues: ATP synthase subunit alpha (506 aa).

ATP is bound at residue 171–178 (GDRKTGKT).

The protein belongs to the ATPase alpha/beta chains family. F-type ATPases have 2 components, CF(1) - the catalytic core - and CF(0) - the membrane proton channel. CF(1) has five subunits: alpha(3), beta(3), gamma(1), delta(1), epsilon(1). CF(0) has three main subunits: a(1), b(2) and c(9-12). The alpha and beta chains form an alternating ring which encloses part of the gamma chain. CF(1) is attached to CF(0) by a central stalk formed by the gamma and epsilon chains, while a peripheral stalk is formed by the delta and b chains.

The protein resides in the cell inner membrane. It catalyses the reaction ATP + H2O + 4 H(+)(in) = ADP + phosphate + 5 H(+)(out). Its function is as follows. Produces ATP from ADP in the presence of a proton gradient across the membrane. The alpha chain is a regulatory subunit. This chain is ATP synthase subunit alpha, found in Anaplasma phagocytophilum (strain HZ).